Consider the following 62-residue polypeptide: uncharacterized protein (62 aa).

The disordered stretch occupies residues 1–62 (MTSTQNLKDK…PPKKSLSQLP (62 aa)). A compositionally biased stretch (basic and acidic residues) spans 7–29 (LKDKFEEEIRQQKEGKGKKEKVW). The span at 32 to 43 (HSDSSYNKQTAV) shows a compositional bias: polar residues.

This is an uncharacterized protein from Dictyostelium discoideum (Social amoeba).